We begin with the raw amino-acid sequence, 468 residues long: RuvB-like helicase 2 (468 aa).

76-83 serves as a coordination point for ATP; it reads GPPSTGKT.

It belongs to the RuvB family. May form heterododecamers with RVB1. Component of the SWR1 chromatin remodeling complex, the INO80 chromatin remodeling complex, and of the R2TP complex.

The protein localises to the nucleus. The enzyme catalyses ATP + H2O = ADP + phosphate + H(+). In terms of biological role, DNA helicase which participates in several chromatin remodeling complexes, including the SWR1 and the INO80 complexes. The SWR1 complex mediates the ATP-dependent exchange of histone H2A for the H2A variant HZT1 leading to transcriptional regulation of selected genes by chromatin remodeling. The INO80 complex remodels chromatin by shifting nucleosomes and is involved in DNA repair. Also involved in pre-rRNA processing. This chain is RuvB-like helicase 2 (rvb2), found in Emericella nidulans (strain FGSC A4 / ATCC 38163 / CBS 112.46 / NRRL 194 / M139) (Aspergillus nidulans).